Reading from the N-terminus, the 75-residue chain is Kappa-scoloptoxin(03)-Ssm1d (75 aa).

The first 23 residues, 1 to 23 (MKLSMAILLVMALIIFTLDKNYS), serve as a signal peptide directing secretion.

Belongs to the scoloptoxin-03 family. In terms of processing, contains 3 disulfide bonds. As to expression, expressed by the venom gland.

It localises to the secreted. Its function is as follows. Inhibits voltage-gated potassium channels. The sequence is that of Kappa-scoloptoxin(03)-Ssm1d from Scolopendra mutilans (Chinese red-headed centipede).